The following is a 359-amino-acid chain: Guanine nucleotide-binding protein alpha-4 subunit (359 aa).

Gly-2 carries the N-myristoyl glycine lipid modification. Cys-3 carries S-palmitoyl cysteine lipidation. One can recognise a G-alpha domain in the interval 31–359; that stretch reads GEIKLLLLGA…RNNLYLCGLY (329 aa). Positions 34-47 are G1 motif; sequence KLLLLGAGESGKST. GTP is bound by residues 39–46, 178–184, 203–207, 272–275, and Ala-331; these read GAGESGKS, LRARVKS, DVGGQ, and NKMD. Residue Ser-46 coordinates Mg(2+). The G2 motif stretch occupies residues 176–184; the sequence is DILRARVKS. The segment at 199-208 is G3 motif; that stretch reads FKMFDVGGQR. The interval 268–275 is G4 motif; sequence ILFLNKMD. Residues 329 to 334 are G5 motif; it reads TCATDT.

Belongs to the G-alpha family. G(i/o/t/z) subfamily. G proteins are composed of 3 units; alpha, beta and gamma. The alpha chain contains the guanine nucleotide binding site. Expressed in ASI neurons.

In terms of biological role, guanine nucleotide-binding proteins (G proteins) are involved as modulators or transducers in various transmembrane signaling systems. Acts in concert with npr-15 to activate TGF-beta-like daf-7 secretion in the ASI neuron, thereby promoting larval development and inhibition of dauer diapause. In Caenorhabditis elegans, this protein is Guanine nucleotide-binding protein alpha-4 subunit (gpa-4).